The primary structure comprises 450 residues: Tubulin beta-3 chain (450 aa).

GTP-binding residues include Gln11, Glu69, Ser138, Gly142, Thr143, Gly144, Asn204, and Asn226. Glu69 provides a ligand contact to Mg(2+). Residues 420-450 (SEYQQYQDATADEEGDYEDEEEGEYQQEEEY) are disordered. Positions 429 to 450 (TADEEGDYEDEEEGEYQQEEEY) are enriched in acidic residues.

Belongs to the tubulin family. In terms of assembly, dimer of alpha and beta chains. A typical microtubule is a hollow water-filled tube with an outer diameter of 25 nm and an inner diameter of 15 nM. Alpha-beta heterodimers associate head-to-tail to form protofilaments running lengthwise along the microtubule wall with the beta-tubulin subunit facing the microtubule plus end conferring a structural polarity. Microtubules usually have 13 protofilaments but different protofilament numbers can be found in some organisms and specialized cells. Mg(2+) serves as cofactor.

Its subcellular location is the cytoplasm. The protein resides in the cytoskeleton. Tubulin is the major constituent of microtubules, a cylinder consisting of laterally associated linear protofilaments composed of alpha- and beta-tubulin heterodimers. Microtubules grow by the addition of GTP-tubulin dimers to the microtubule end, where a stabilizing cap forms. Below the cap, tubulin dimers are in GDP-bound state, owing to GTPase activity of alpha-tubulin. This is Tubulin beta-3 chain (TUBB3) from Arabidopsis thaliana (Mouse-ear cress).